We begin with the raw amino-acid sequence, 858 residues long: Bifunctional uridylyltransferase/uridylyl-removing enzyme (858 aa).

Positions 1–324 are uridylyltransferase; sequence MSASVAEPPP…PATSGVTRVL (324 aa). The tract at residues 325–681 is uridylyl-removing; sequence SPGRFVEKQG…ARPSPVGDAL (357 aa). Positions 443-565 constitute an HD domain; sequence VDQHILMVLR…VGSERRLTAL (123 aa). 2 ACT domains span residues 682 to 761 and 790 to 858; these read QVLV…PEPS and ILSV…AIAV.

This sequence belongs to the GlnD family. Mg(2+) is required as a cofactor.

The catalysed reaction is [protein-PII]-L-tyrosine + UTP = [protein-PII]-uridylyl-L-tyrosine + diphosphate. It carries out the reaction [protein-PII]-uridylyl-L-tyrosine + H2O = [protein-PII]-L-tyrosine + UMP + H(+). With respect to regulation, uridylyltransferase (UTase) activity is inhibited by glutamine, while glutamine activates uridylyl-removing (UR) activity. Its function is as follows. Modifies, by uridylylation and deuridylylation, the PII regulatory proteins (GlnB and homologs), in response to the nitrogen status of the cell that GlnD senses through the glutamine level. Under low glutamine levels, catalyzes the conversion of the PII proteins and UTP to PII-UMP and PPi, while under higher glutamine levels, GlnD hydrolyzes PII-UMP to PII and UMP (deuridylylation). Thus, controls uridylylation state and activity of the PII proteins, and plays an important role in the regulation of nitrogen assimilation and metabolism. The polypeptide is Bifunctional uridylyltransferase/uridylyl-removing enzyme (Burkholderia mallei (strain ATCC 23344)).